We begin with the raw amino-acid sequence, 601 residues long: NADH-quinone oxidoreductase subunit C/D (601 aa).

Residues 1 to 191 (MKLTRDFPHN…DPFMLDAAKQ (191 aa)) form an NADH dehydrogenase I subunit C region. An NADH dehydrogenase I subunit D region spans residues 215–601 (DYMFLNLGPN…IDFVMSDVDR (387 aa)).

It in the N-terminal section; belongs to the complex I 30 kDa subunit family. In the C-terminal section; belongs to the complex I 49 kDa subunit family. NDH-1 is composed of 13 different subunits. Subunits NuoB, CD, E, F, and G constitute the peripheral sector of the complex.

Its subcellular location is the cell inner membrane. It catalyses the reaction a quinone + NADH + 5 H(+)(in) = a quinol + NAD(+) + 4 H(+)(out). Functionally, NDH-1 shuttles electrons from NADH, via FMN and iron-sulfur (Fe-S) centers, to quinones in the respiratory chain. The immediate electron acceptor for the enzyme in this species is believed to be ubiquinone. Couples the redox reaction to proton translocation (for every two electrons transferred, four hydrogen ions are translocated across the cytoplasmic membrane), and thus conserves the redox energy in a proton gradient. This chain is NADH-quinone oxidoreductase subunit C/D, found in Shewanella oneidensis (strain ATCC 700550 / JCM 31522 / CIP 106686 / LMG 19005 / NCIMB 14063 / MR-1).